A 202-amino-acid chain; its full sequence is Small ribosomal subunit protein uS4c (202 aa).

The 65-residue stretch at 90-154 (MRLDNIIFRL…SQSIIIKNLN (65 aa)) folds into the S4 RNA-binding domain.

The protein belongs to the universal ribosomal protein uS4 family. As to quaternary structure, part of the 30S ribosomal subunit. Contacts protein S5. The interaction surface between S4 and S5 is involved in control of translational fidelity.

The protein localises to the plastid. The protein resides in the chloroplast. Its function is as follows. One of the primary rRNA binding proteins, it binds directly to 16S rRNA where it nucleates assembly of the body of the 30S subunit. Functionally, with S5 and S12 plays an important role in translational accuracy. The protein is Small ribosomal subunit protein uS4c (rps4) of Marchantia polymorpha (Common liverwort).